A 235-amino-acid chain; its full sequence is 2-C-methyl-D-erythritol 4-phosphate cytidylyltransferase (235 aa).

It belongs to the IspD/TarI cytidylyltransferase family. IspD subfamily.

The catalysed reaction is 2-C-methyl-D-erythritol 4-phosphate + CTP + H(+) = 4-CDP-2-C-methyl-D-erythritol + diphosphate. It functions in the pathway isoprenoid biosynthesis; isopentenyl diphosphate biosynthesis via DXP pathway; isopentenyl diphosphate from 1-deoxy-D-xylulose 5-phosphate: step 2/6. Its function is as follows. Catalyzes the formation of 4-diphosphocytidyl-2-C-methyl-D-erythritol from CTP and 2-C-methyl-D-erythritol 4-phosphate (MEP). The chain is 2-C-methyl-D-erythritol 4-phosphate cytidylyltransferase from Mycolicibacterium paratuberculosis (strain ATCC BAA-968 / K-10) (Mycobacterium paratuberculosis).